The chain runs to 145 residues: Transcriptional regulator MraZ (145 aa).

2 consecutive SpoVT-AbrB domains span residues 5–49 (TYNH…LESE) and 78–121 (TYKI…AKEV).

Belongs to the MraZ family. As to quaternary structure, forms oligomers.

The protein resides in the cytoplasm. It is found in the nucleoid. This is Transcriptional regulator MraZ from Ureaplasma parvum serovar 3 (strain ATCC 27815 / 27 / NCTC 11736).